The chain runs to 310 residues: Putative methyltransferase mtx subunit H (310 aa).

Belongs to the MtrH family. May be part of a complex composed of 3 subunits; MtxA, MtxH and MtxX.

The protein is Putative methyltransferase mtx subunit H (mtxH) of Methanosarcina mazei (strain ATCC BAA-159 / DSM 3647 / Goe1 / Go1 / JCM 11833 / OCM 88) (Methanosarcina frisia).